The following is a 468-amino-acid chain: 6-phospho-beta-galactosidase (468 aa).

Gln-19, His-116, Asn-159, Glu-160, and Asn-297 together coordinate D-galactose 6-phosphate. Catalysis depends on Glu-160, which acts as the Proton donor. Residue Glu-375 is the Nucleophile of the active site. D-galactose 6-phosphate contacts are provided by Ser-428, Trp-429, Lys-435, and Tyr-437.

It belongs to the glycosyl hydrolase 1 family.

The catalysed reaction is a 6-phospho-beta-D-galactoside + H2O = D-galactose 6-phosphate + an alcohol. It participates in carbohydrate metabolism; lactose degradation; D-galactose 6-phosphate and beta-D-glucose from lactose 6-phosphate: step 1/1. The sequence is that of 6-phospho-beta-galactosidase from Streptococcus uberis (strain ATCC BAA-854 / 0140J).